Consider the following 41-residue polypeptide: Large ribosomal subunit protein bL36 (41 aa).

Belongs to the bacterial ribosomal protein bL36 family.

In Methylorubrum extorquens (strain CM4 / NCIMB 13688) (Methylobacterium extorquens), this protein is Large ribosomal subunit protein bL36.